A 209-amino-acid polypeptide reads, in one-letter code: ATP-dependent Clp protease proteolytic subunit 2 (209 aa).

Ser-107 functions as the Nucleophile in the catalytic mechanism. Residue His-132 is part of the active site.

The protein belongs to the peptidase S14 family. In terms of assembly, fourteen ClpP subunits assemble into 2 heptameric rings which stack back to back to give a disk-like structure with a central cavity, resembling the structure of eukaryotic proteasomes.

The protein resides in the cytoplasm. The catalysed reaction is Hydrolysis of proteins to small peptides in the presence of ATP and magnesium. alpha-casein is the usual test substrate. In the absence of ATP, only oligopeptides shorter than five residues are hydrolyzed (such as succinyl-Leu-Tyr-|-NHMec, and Leu-Tyr-Leu-|-Tyr-Trp, in which cleavage of the -Tyr-|-Leu- and -Tyr-|-Trp bonds also occurs).. Its function is as follows. Cleaves peptides in various proteins in a process that requires ATP hydrolysis. Has a chymotrypsin-like activity. Plays a major role in the degradation of misfolded proteins. The polypeptide is ATP-dependent Clp protease proteolytic subunit 2 (Corynebacterium jeikeium (strain K411)).